A 154-amino-acid polypeptide reads, in one-letter code: Large ribosomal subunit protein uL13 (154 aa).

This sequence belongs to the universal ribosomal protein uL13 family. Part of the 50S ribosomal subunit.

This protein is one of the early assembly proteins of the 50S ribosomal subunit, although it is not seen to bind rRNA by itself. It is important during the early stages of 50S assembly. This is Large ribosomal subunit protein uL13 from Bartonella henselae (strain ATCC 49882 / DSM 28221 / CCUG 30454 / Houston 1) (Rochalimaea henselae).